The sequence spans 49 residues: Splenin (49 aa).

One can recognise an LEM-like domain in the interval 4–47 (LEDPSVLTKEKLKSELVANNVTLPAGEQRKEVYVELYLQHLTAL). Positions 32 to 36 (RKEVY) are essential for biological activity.

Belongs to the thymopoietin family.

In terms of biological role, hormone of the spleen with pleiotropic actions on prothymocytes, mature T-cells, the nicotinic acetylcholine receptor, and pituitary corticotrophs. The protein is Splenin (SP) of Bos taurus (Bovine).